Reading from the N-terminus, the 429-residue chain is Glutamate dehydrogenase B (429 aa).

Positions 1–20 (MAQTPPPESAPSTDSEPETA) are disordered. Residue Lys119 is part of the active site.

Belongs to the Glu/Leu/Phe/Val dehydrogenases family. In terms of assembly, homohexamer.

This chain is Glutamate dehydrogenase B (gdhB), found in Halobacterium salinarum (strain ATCC 700922 / JCM 11081 / NRC-1) (Halobacterium halobium).